The primary structure comprises 69 residues: DNA gyrase inhibitor YacG (69 aa).

Residues C7, C10, C26, and C30 each coordinate Zn(2+).

This sequence belongs to the DNA gyrase inhibitor YacG family. As to quaternary structure, interacts with GyrB. Zn(2+) is required as a cofactor.

Its function is as follows. Inhibits all the catalytic activities of DNA gyrase by preventing its interaction with DNA. Acts by binding directly to the C-terminal domain of GyrB, which probably disrupts DNA binding by the gyrase. The chain is DNA gyrase inhibitor YacG from Shewanella baltica (strain OS195).